Consider the following 293-residue polypeptide: Foldase protein PrsA 2 (293 aa).

The first 20 residues, 1–20 (MKKKLILGLVMMMALFSLAA), serve as a signal peptide directing secretion. A lipid anchor (N-palmitoyl cysteine) is attached at cysteine 21. Residue cysteine 21 is the site of S-diacylglycerol cysteine attachment. Positions 135 to 226 (QPDITVSHIL…YGYHIIQMDK (92 aa)) constitute a PpiC domain.

Belongs to the PrsA family.

The protein resides in the cell membrane. The enzyme catalyses [protein]-peptidylproline (omega=180) = [protein]-peptidylproline (omega=0). Plays a major role in protein secretion by helping the post-translocational extracellular folding of several secreted proteins. This chain is Foldase protein PrsA 2, found in Listeria monocytogenes serotype 4b (strain F2365).